Here is a 197-residue protein sequence, read N- to C-terminus: Elongation factor Ts (197 aa).

The tract at residues 81 to 84 (TDFV) is involved in Mg(2+) ion dislocation from EF-Tu.

It belongs to the EF-Ts family.

It localises to the cytoplasm. Associates with the EF-Tu.GDP complex and induces the exchange of GDP to GTP. It remains bound to the aminoacyl-tRNA.EF-Tu.GTP complex up to the GTP hydrolysis stage on the ribosome. This Fervidobacterium nodosum (strain ATCC 35602 / DSM 5306 / Rt17-B1) protein is Elongation factor Ts.